A 79-amino-acid polypeptide reads, in one-letter code: CATR tumorigenic conversion 1 protein (79 aa).

The sequence is that of CATR tumorigenic conversion 1 protein (CATR1) from Homo sapiens (Human).